The chain runs to 158 residues: Endoribonuclease YbeY (158 aa).

His-124, His-128, and His-134 together coordinate Zn(2+).

It belongs to the endoribonuclease YbeY family. Zn(2+) is required as a cofactor.

It is found in the cytoplasm. Single strand-specific metallo-endoribonuclease involved in late-stage 70S ribosome quality control and in maturation of the 3' terminus of the 16S rRNA. The sequence is that of Endoribonuclease YbeY from Caldicellulosiruptor bescii (strain ATCC BAA-1888 / DSM 6725 / KCTC 15123 / Z-1320) (Anaerocellum thermophilum).